A 788-amino-acid polypeptide reads, in one-letter code: uncharacterized protein (788 aa).

Positions 485–693 (EMITTAWIKL…IYIVLKSYKG (209 aa)) constitute an Adrift-type SAM-dependent 2'-O-MTase domain. Residues Gly521 and Asp604 each contribute to the S-adenosyl-L-methionine site. The Proton acceptor role is filled by Lys645.

This is an uncharacterized protein from Acanthamoeba polyphaga (Amoeba).